We begin with the raw amino-acid sequence, 177 residues long: Small ribosomal subunit protein uS5 (177 aa).

Residues 21–84 (LKEKMVSVNR…DEARQRMVRV (64 aa)) enclose the S5 DRBM domain.

It belongs to the universal ribosomal protein uS5 family. As to quaternary structure, part of the 30S ribosomal subunit. Contacts proteins S4 and S8.

With S4 and S12 plays an important role in translational accuracy. Its function is as follows. Located at the back of the 30S subunit body where it stabilizes the conformation of the head with respect to the body. This chain is Small ribosomal subunit protein uS5, found in Nitrosomonas europaea (strain ATCC 19718 / CIP 103999 / KCTC 2705 / NBRC 14298).